A 158-amino-acid polypeptide reads, in one-letter code: Regulator of sigma D (158 aa).

The protein belongs to the Rsd/AlgQ family. Interacts with RpoD.

It is found in the cytoplasm. Functionally, binds RpoD and negatively regulates RpoD-mediated transcription activation by preventing the interaction between the primary sigma factor RpoD with the catalytic core of the RNA polymerase and with promoter DNA. May be involved in replacement of the RNA polymerase sigma subunit from RpoD to RpoS during the transition from exponential growth to the stationary phase. The protein is Regulator of sigma D of Shigella boydii serotype 4 (strain Sb227).